A 329-amino-acid chain; its full sequence is Peroxidase 58 (329 aa).

The N-terminal stretch at 1–23 is a signal peptide; the sequence is MGLSKTIPLVLLPILMFGVLSNA. 4 disulfides stabilise this stretch: Cys-34/Cys-116, Cys-67/Cys-72, Cys-122/Cys-325, and Cys-201/Cys-234. An N-linked (GlcNAc...) asparagine glycan is attached at Asn-36. The active-site Proton acceptor is His-65. Residues Asp-66, Val-69, Gly-71, Asp-73, and Ser-75 each coordinate Ca(2+). Pro-164 contributes to the substrate binding site. His-194 serves as a coordination point for heme b. Thr-195 is a Ca(2+) binding site. N-linked (GlcNAc...) asparagine glycosylation occurs at Asn-210. Residues Asp-247, Ser-250, and Asp-255 each contribute to the Ca(2+) site.

The protein belongs to the peroxidase family. Classical plant (class III) peroxidase subfamily. Requires heme b as cofactor. It depends on Ca(2+) as a cofactor.

It localises to the secreted. The catalysed reaction is 2 a phenolic donor + H2O2 = 2 a phenolic radical donor + 2 H2O. Functionally, removal of H(2)O(2), oxidation of toxic reductants, biosynthesis and degradation of lignin, suberization, auxin catabolism, response to environmental stresses such as wounding, pathogen attack and oxidative stress. These functions might be dependent on each isozyme/isoform in each plant tissue. The protein is Peroxidase 58 (PER58) of Arabidopsis thaliana (Mouse-ear cress).